We begin with the raw amino-acid sequence, 308 residues long: Malonate utilization transcriptional regulator (308 aa).

An HTH lysR-type domain is found at 9-66 (ITFRKLSVFMMFMAKGNIARTAEAMKLSSVSVHRALHTLEEGVGCPLFVHKGRNLLPL). The H-T-H motif DNA-binding region spans 26-45 (IARTAEAMKLSSVSVHRALH).

Belongs to the LysR transcriptional regulatory family.

Functionally, transcriptional regulator of the mau genes for malonate utilization. This Klebsiella pneumoniae protein is Malonate utilization transcriptional regulator (mauR).